A 210-amino-acid chain; its full sequence is Protein-methionine-sulfoxide reductase heme-binding subunit MsrQ (210 aa).

Transmembrane regions (helical) follow at residues 8–28 (LAVF…AWIF), 37–57 (VLVE…LSMT), 75–95 (LGLW…LFIL), 110–130 (PYII…VTSN), 147–167 (IIYV…RADL), and 169–189 (EWAL…PVFA).

This sequence belongs to the MsrQ family. Heterodimer of a catalytic subunit (MsrP) and a heme-binding subunit (MsrQ). It depends on FMN as a cofactor. Requires heme b as cofactor.

Its subcellular location is the cell inner membrane. Part of the MsrPQ system that repairs oxidized periplasmic proteins containing methionine sulfoxide residues (Met-O), using respiratory chain electrons. Thus protects these proteins from oxidative-stress damage caused by reactive species of oxygen and chlorine generated by the host defense mechanisms. MsrPQ is essential for the maintenance of envelope integrity under bleach stress, rescuing a wide series of structurally unrelated periplasmic proteins from methionine oxidation. MsrQ provides electrons for reduction to the reductase catalytic subunit MsrP, using the quinone pool of the respiratory chain. This is Protein-methionine-sulfoxide reductase heme-binding subunit MsrQ from Pseudomonas syringae pv. syringae (strain B728a).